Reading from the N-terminus, the 2799-residue chain is MTSIHFVVHPLPGTEDQLNDRLREVSEKLNKYNLNSHPPLNVLEQATIKQCVVGPNHAAFLLEDGRVCRIGFSVQPDRLELGKPDNNDGSKLNSNSGAGRTSRPGRTSDSPWFLSGSETLGRLAGNTLGSRWSSGVGGSGGGSSGRSSAGARDSRRQTRVIRTGRDRGSGLLGSQPQPVIPASVIPEELISQAQVVLQGKSRSVIIRELQRTNLDVNLAVNNLLSRDDEDGDDGDDTASESYLPGEDLMSLLDADIHSAHPSVIIDADAMFSEDISYFGYPSFRRSSLSRLGSSRVLLLPLERDSELLRERESVLRLRERRWLDGASFDNERGSTSKEGEPNLDKKNTPVQSPVSLGEDLQWWPDKDGTKFICIGALYSELLAVSSKGELYQWKWSESEPYRNAQNPSLHHPRATFLGLTNEKIVLLSANSIRATVATENNKVATWVDETLSSVASKLEHTAQTYSELQGERIVSLHCCALYTCAQLENSLYWWGVVPFSQRKKMLEKARAKNKKPKSSAGISSMPNITVGTQVCLRNNPLYHAGAVAFSISAGIPKVGVLMESVWNMNDSCRFQLRSPESLKNMEKASKTTEAKPESKQEPVKTEMGPPPSPASTCSDASSIASSASMPYKRRRSTPAPKEEEKVNEEQWSLREVVFVEDVKNVPVGKVLKVDGAYVAVKFPGTSSNTNCQNSSGPDADPSSLLQDCRLLRIDELQVVKTGGTPKVPDCFQRTPKKLCIPEKTEILAVNVDSKGVHAVLKTGNWVRYCIFDLATGKAEQENNFPTSSIAFLGQNERNVAIFTAGQESPIILRDGNGTIYPMAKDCMGGIRDPDWLDLPPISSLGMGVHSLINLPANSTIKKKAAVIIMAVEKQTLMQHILRCDYEACRQYLMNLEQAVVLEQNLQMLQTFISHRCDGNRNILHACVSVCFPTSNKETKEEEEAERSERNTFAERLSAVEAIANAISVVSSNGPGNRAGSSSSRSLRLREMMRRSLRAAGLGRHEAGASSSDHQDPVSPPIAPPSWVPDPPAMDPDGDIDFILAPAVGSLTTAATGTGQGPSTSTIPGPSTEPSVVESKDRKANAHFILKLLCDSVVLQPYLRELLSAKDARGMTPFMSAVSGRAYPAAITILETAQKIAKAEISSSEKEEDVFMGMVCPSGTNPDDSPLYVLCCNDTCSFTWTGAEHINQDIFECRTCGLLESLCCCTECARVCHKGHDCKLKRTSPTAYCDCWEKCKCKTLIAGQKSARLDLLYRLLTATNLVTLPNSRGEHLLLFLVQTVARQTVEHCQYRPPRIREDRNRKTASPEDSDMPDHDLEPPRFAQLALERVLQDWNALKSMIMFGSQENKDPLSASSRIGHLLPEEQVYLNQQSGTIRLDCFTHCLIVKCTADILLLDTLLGTLVKELQNKYTPGRREEAIAVTMRFLRSVARVFVILSVEMASSKKKNNFIPQPIGKCKRVFQALLPYAVEELCNVAESLIVPVRMGIARPTAPFTLASTSIDAMQGSEELFSVEPLPPRPSSDQSSSSSQSQSSYIIRNPQQRRISQSQPVRGRDEEQDDIVSADVEEVEVVEGVAGEEDHHDEQEEHGEENAEAEGQHDEHDEDGSDMELDLLAAAETESDSESNHSNQDNASGRRSVVTAATAGSEAGASSVPAFFSEDDSQSNDSSDSDSSSSQSDDIEQETFMLDEPLERTTNSSHANGAAQAPRSMQWAVRNTQHQRAASTAPSSTSTPAASSAGLIYIDPSNLRRSGTISTSAAAAAAALEASNASSYLTSASSLARAYSIVIRQISDLMGLIPKYNHLVYSQIPAAVKLTYQDAVNLQNYVEEKLIPTWNWMVSIMDSTEAQLRYGSALASAGDPGHPNHPLHASQNSARRERMTAREEASLRTLEGRRRATLLSARQGMMSARGDFLNYALSLMRSHNDEHSDVLPVLDVCSLKHVAYVFQALIYWIKAMNQQTTLDTPQLERKRTRELLELGIDNEDSEHENDDDTNQSATLNDKDDDSLPAETGQNHPFFRRSDSMTFLGCIPPNPFEVPLAEAIPLADQPHLLQPNARKEDLFGRPSQGLYSSSASSGKCLMEVTVDRNCLEVLPTKMSYAANLKNVMNMQNRQKKEGEEQPVLPEETESSKPGPSAHDLAAQLKSSLLAEIGLTESEGPPLTSFRPQCSFMGMVISHDMLLGRWRLSLELFGRVFMEDVGAEPGSILTELGGFEVKESKFRREMEKLRNQQSRDLSLEVDRDRDLLIQQTMRQLNNHFGRRCATTPMAVHRVKVTFKDEPGEGSGVARSFYTAIAQAFLSNEKLPNLECIQNANKGTHTSLMQRLRNRGERDREREREREMRRSSGLRAGSRRDRDRDFRRQLSIDTRPFRPASEGNPSDDPEPLPAHRQALGERLYPRVQAMQPAFASKITGMLLELSPAQLLLLLASEDSLRARVDEAMELIIAHGRENGADSILDLGLVDSSEKVQQENRKRHGSSRSVVDMDLDDTDDGDDNAPLFYQPGKRGFYTPRPGKNTEARLNCFRNIGRILGLCLLQNELCPITLNRHVIKVLLGRKVNWHDFAFFDPVMYESLRQLILASQSSDADAVFSAMDLAFAIDLCKEEGGGQVELIPNGVNIPVTPQNVYEYVRKYAEHRMLVVAEQPLHAMRKGLLDVLPKNSLEDLTAEDFRLLVNGCGEVNVQMLISFTSFNDESGENAEKLLQFKRWFWSIVEKMSMTERQDLVYFWTSSPSLPASEEGFQPMPSITIRPPDDQHLPTANTCISRLYVPLYSSKQILKQKLLLAIKTKNFGFV.

The residue at position 2 (T2) is an N-acetylthreonine. Over residues 77–88 (DRLELGKPDNND) the composition is skewed to basic and acidic residues. Positions 77–175 (DRLELGKPDN…DRGSGLLGSQ (99 aa)) are disordered. Polar residues predominate over residues 89-110 (GSKLNSNSGAGRTSRPGRTSDS). A Phosphoserine modification is found at S110. The segment covering 135–144 (GVGGSGGGSS) has biased composition (gly residues). The UBA domain occupies 184–226 (VIPEELISQAQVVLQGKSRSVIIRELQRTNLDVNLAVNNLLSR). At S327 the chain carries Phosphoserine. The segment covering 328–347 (FDNERGSTSKEGEPNLDKKN) has biased composition (basic and acidic residues). Residues 328–352 (FDNERGSTSKEGEPNLDKKNTPVQS) are disordered. S352 and S578 each carry phosphoserine. The tract at residues 579-648 (PESLKNMEKA…APKEEEKVNE (70 aa)) is disordered. The segment covering 583–604 (KNMEKASKTTEAKPESKQEPVK) has biased composition (basic and acidic residues). S612 carries the post-translational modification Phosphoserine. Residues 614 to 628 (ASTCSDASSIASSAS) are compositionally biased toward low complexity. T637 is subject to Phosphothreonine. Phosphoserine is present on residues S808, S928, and S1018. 2 disordered regions span residues 999–1031 (AGLG…PDPP) and 1052–1075 (TAAT…EPSV). Over residues 1017-1031 (VSPPIAPPSWVPDPP) the composition is skewed to pro residues. A compositionally biased stretch (polar residues) spans 1052–1073 (TAATGTGQGPSTSTIPGPSTEP). Residues T1115 and T1135 each carry the phosphothreonine modification. Residues 1177–1245 (DTCSFTWTGA…EKCKCKTLIA (69 aa)) form a UBR-type zinc finger. Zn(2+) is bound by residues C1179, C1196, C1199, C1208, C1211, C1215, H1216, and H1219. S1227 is subject to Phosphoserine. The Zn(2+) site is built by C1232, C1234, and C1240. The disordered stretch occupies residues 1299–1318 (REDRNRKTASPEDSDMPDHD). S1308, S1355, S1375, and S1481 each carry phosphoserine. The segment at 1515 to 1740 (SVEPLPPRPS…PSSTSTPAAS (226 aa)) is disordered. A compositionally biased stretch (low complexity) spans 1524-1537 (SSDQSSSSSQSQSS). The span at 1538–1553 (YIIRNPQQRRISQSQP) shows a compositional bias: polar residues. S1549 is subject to Phosphoserine. Acidic residues-rich tracts occupy residues 1559–1574 (EEQD…EVEV) and 1605–1614 (HDEDGSDMEL). Residues 1629–1638 (NHSNQDNASG) show a composition bias toward polar residues. 3 stretches are compositionally biased toward low complexity: residues 1641-1657 (SVVT…ASSV), 1668-1681 (SNDS…SSQS), and 1726-1740 (AAST…PAAS). The residue at position 1736 (T1736) is a Phosphothreonine. S1741 is subject to Phosphoserine. At Y1746 the chain carries Phosphotyrosine. Phosphoserine is present on S1780. Positions 1859–1890 (LASAGDPGHPNHPLHASQNSARRERMTAREEA) are disordered. Positions 1879 to 1890 (ARRERMTAREEA) are enriched in basic and acidic residues. Position 1969 is a phosphothreonine (T1969). The tract at residues 1984 to 2021 (GIDNEDSEHENDDDTNQSATLNDKDDDSLPAETGQNHP) is disordered. Residues 1985 to 1998 (IDNEDSEHENDDDT) are compositionally biased toward acidic residues. 3 positions are modified to phosphoserine: S1990, S2026, and S2028. T2030 bears the Phosphothreonine mark. A Phosphoserine modification is found at S2076. The segment at 2117 to 2142 (RQKKEGEEQPVLPEETESSKPGPSAH) is disordered. T2213 carries the post-translational modification Phosphothreonine. Phosphoserine is present on residues S2241 and S2289. The disordered stretch occupies residues 2323-2392 (HTSLMQRLRN…PSDDPEPLPA (70 aa)). Composition is skewed to basic and acidic residues over residues 2332 to 2348 (NRGE…EMRR) and 2356 to 2368 (SRRD…RRQL). The PABC domain maps to 2377–2454 (PASEGNPSDD…AMELIIAHGR (78 aa)). Positions 2462 to 2799 (LDLGLVDSSE…AIKTKNFGFV (338 aa)) constitute an HECT domain. 3 positions are modified to phosphoserine: S2469, S2484, and S2486. A disordered region spans residues 2473–2493 (VQQENRKRHGSSRSVVDMDLD). C2768 (glycyl thioester intermediate) is an active-site residue.

This sequence belongs to the UBR5 family. As to quaternary structure, homotetramer; composed of a dimer of dimers. Associates with CDK9 and TFIIS/TCEA1 and forms a transcription regulatory complex made of CDK9, RNAP II, UBR5 and TFIIS/TCEA1 that can stimulate target gene transcription (e.g. gamma fibrinogen/FGG) by recruiting their promoters. Associates with the E3 ligase complex containing DYRK2, EDD/UBR5, DDB1 and DCAF1 proteins (EDVP complex). Binds TOPBP1. Interacts with PIH1D1. Interacts with CIB1. In terms of assembly, (Microbial infection) Interacts with human T-cell leukemia virus 1/HTLV-1 protein HBZ; this interaction modulates HBZ stability. As to expression, widely expressed. Most abundant in testis and expressed at high levels in brain, pituitary and kidney.

The protein resides in the nucleus. It localises to the cytoplasm. The enzyme catalyses S-ubiquitinyl-[E2 ubiquitin-conjugating enzyme]-L-cysteine + [acceptor protein]-L-lysine = [E2 ubiquitin-conjugating enzyme]-L-cysteine + N(6)-ubiquitinyl-[acceptor protein]-L-lysine.. Its pathway is protein modification; protein ubiquitination. E3 ubiquitin-protein ligase involved in different protein quality control pathways in the cytoplasm and nucleus. Mainly acts as a ubiquitin chain elongator that extends pre-ubiquitinated substrates. Component of the N-end rule pathway: ubiquitinates proteins bearing specific N-terminal residues that are destabilizing according to the N-end rule, leading to their degradation. Recognizes type-1 N-degrons, containing positively charged amino acids (Arg, Lys and His). Together with UBR4, part of a cytoplasm protein quality control pathway that prevents protein aggregation by catalyzing assembly of heterotypic 'Lys-11'-/'Lys-48'-linked branched ubiquitin chains on aggregated proteins, leading to substrate recognition by the segregase p97/VCP and degradation by the proteasome: UBR5 is probably branching multiple 'Lys-48'-linked chains of substrates initially modified with mixed conjugates by UBR4. Together with ITCH, catalyzes 'Lys-48'-/'Lys-63'-branched ubiquitination of TXNIP, leading to its degradation: UBR5 mediates branching of 'Lys-48'-linked chains of substrates initially modified with 'Lys-63'-linked conjugates by ITCH. Catalytic component of a nuclear protein quality control pathway that mediates ubiquitination and degradation of unpaired transcription factors (i.e. transcription factors that are not assembled into functional multiprotein complexes): specifically recognizes and binds degrons that are not accessible when transcription regulators are associated with their coactivators. Ubiquitinates various unpaired transcription regulator (MYC, SUPT4H1, SUPT5H, CDC20 and MCRS1), as well as ligand-bound nuclear receptors (ESR1, NR1H3, NR3C1, PGR, RARA, RXRA AND VDR) that are not associated with their nuclear receptor coactivators (NCOAs). Involved in maturation and/or transcriptional regulation of mRNA by mediating polyubiquitination and activation of CDK9. Also acts as a regulator of DNA damage response by acting as a suppressor of RNF168, an E3 ubiquitin-protein ligase that promotes accumulation of 'Lys-63'-linked histone H2A and H2AX at DNA damage sites, thereby acting as a guard against excessive spreading of ubiquitinated chromatin at damaged chromosomes. Regulates DNA topoisomerase II binding protein (TopBP1) in the DNA damage response. Ubiquitinates acetylated PCK1. Acts as a positive regulator of the canonical Wnt signaling pathway by mediating (1) ubiquitination and stabilization of CTNNB1, and (2) 'Lys-48'-linked ubiquitination and degradation of TLE3. Promotes disassembly of the mitotic checkpoint complex (MCC) from the APC/C complex by catalyzing ubiquitination of BUB1B, BUB3 and CDC20. Plays an essential role in extraembryonic development. Required for the maintenance of skeletal tissue homeostasis by acting as an inhibitor of hedgehog (HH) signaling. The polypeptide is E3 ubiquitin-protein ligase UBR5 (UBR5) (Homo sapiens (Human)).